A 66-amino-acid chain; its full sequence is Small ribosomal subunit protein bS21 (66 aa).

Belongs to the bacterial ribosomal protein bS21 family.

The polypeptide is Small ribosomal subunit protein bS21 (Solidesulfovibrio magneticus (strain ATCC 700980 / DSM 13731 / RS-1) (Desulfovibrio magneticus)).